A 701-amino-acid chain; its full sequence is DUF724 domain-containing protein 6 (701 aa).

2 disordered regions span residues 299-353 (MKTK…KRAN) and 374-452 (VEPV…DESC). The span at 326–340 (LNLEKSAETLTKAES) shows a compositional bias: basic and acidic residues. Residues 381–399 (RVRTATPLKQTKADTQGKS) are compositionally biased toward polar residues. 3 stretches are compositionally biased toward basic and acidic residues: residues 403 to 412 (KTLEPMRDEN), 421 to 430 (KVLEEKNSEK), and 437 to 449 (RQEEHNSDLKETD). The DUF724 domain occupies 514–700 (LPFAKKSPFW…LEFQSTASAP (187 aa)). The stretch at 626–670 (LEKKIEAGEIEGHTYEEEMAELELKILELKRQQVVAKEMKEATDK) forms a coiled coil.

Expressed in roots, stems and flowers.

Its subcellular location is the nucleus. Functionally, may be involved in the polar growth of plant cells via transportation of RNAs. In Arabidopsis thaliana (Mouse-ear cress), this protein is DUF724 domain-containing protein 6.